Here is a 587-residue protein sequence, read N- to C-terminus: MATGFSFGSGTLGSTTVAPGGTGAGSGFSFGTVASSTPSVGLNFGSLGSSVTPASTSASAGGFGTGLFGSKPATGFTLGGTSAGTAATTSASTTGFSLGFSKPAASATPFALPVTSTSASGLTLSSALTSTPAASTGFTLNNLGATPATTTTASTGLSLGGALAGLGGSLFQSGNTATSGLGQNALSLSLGTTAPTSAASNEGLGGIDFSTSSDKKSDKTGTRPEDSKALKDENLPPVICQDVENLQKFVKEQKQVQEEISRMSSKAMLKVQEDIKALKQLLSLAASGLQRNTLNIDKLKLETAQELKNAEIALRTQKTPPGLQHENTAPADYFRILVQQFEVQLQQYRQQIEELENHLATQASNSHITPQDLSMAMQKIYQTFVALAAQLQSIHENVKVLKEQYLGYRKMFLGDAVDVFEARRTEAKKWQNAPRVTTGPTPFSTMPNAAAVAMAATLTQQQQPATGPQPSLGVSFGTPFGSGIGTGLQSSGLGSSNLGGFGTSSGFGCGTTGASTFGFGTTDKPSGSLSAGFGSSSTSGFNFSNPGITASAGLTFGVSNPASAGFGTGGQLLQLKRPPAGNKRGKR.

Repeat copies occupy residues 7 to 8 (FG), 30 to 31 (FG), 44 to 45 (FG), 63 to 64 (FG), and 68 to 69 (FG). The segment at 7-567 (FGSGTLGSTT…VSNPASAGFG (561 aa)) is 14 X 2 AA repeats of F-G. The disordered stretch occupies residues 196–236 (TSAASNEGLGGIDFSTSSDKKSDKTGTRPEDSKALKDENLP). A compositionally biased stretch (basic and acidic residues) spans 213 to 234 (SDKKSDKTGTRPEDSKALKDEN). Coiled coils occupy residues 244–264 (ENLQ…SRMS) and 302–369 (ETAQ…SHIT). A Phosphothreonine modification is found at T319. Tandem repeats lie at residues 476 to 477 (FG), 480 to 481 (FG), 501 to 502 (FG), 507 to 508 (FG), 517 to 518 (FG), 519 to 520 (FG), 533 to 534 (FG), 556 to 557 (FG), and 566 to 567 (FG). The interval 565–587 (GFGTGGQLLQLKRPPAGNKRGKR) is disordered.

This sequence belongs to the NUP58 family. As to quaternary structure, component of the p62 complex, a complex at least composed of NUP62, NUP54, and NUP58. Interacts with NUTF2. Interacts with SRP1-alpha and Importin p97 proteins when they are together, but not with SRP1-alpha protein alone. Post-translationally, O-glycosylated.

The protein localises to the nucleus. It localises to the nuclear pore complex. It is found in the nucleus membrane. Component of the nuclear pore complex, a complex required for the trafficking across the nuclear membrane. In Mus musculus (Mouse), this protein is Nucleoporin p58/p45.